Consider the following 173-residue polypeptide: T-complex protein 1 subunit alpha (173 aa).

The protein belongs to the TCP-1 chaperonin family. In terms of assembly, component of the chaperonin-containing T-complex (TRiC), a heterooligomeric complex of about 850 to 900 kDa that forms two stacked rings, 12 to 16 nm in diameter.

It is found in the cytoplasm. Its subcellular location is the cytosol. Component of the chaperonin-containing T-complex (TRiC), a molecular chaperone complex that assists the folding of proteins upon ATP hydrolysis. In Ambystoma mexicanum (Axolotl), this protein is T-complex protein 1 subunit alpha.